Reading from the N-terminus, the 687-residue chain is SLCO1B3-SLCO1B7 readthrough transcript protein (687 aa).

Topologically, residues 1–29 (MDQHQHLNKTAESASSEKKKTRRCNGFKM) are cytoplasmic. Residues 30 to 50 (FLAALSFSYIAKALGGIIMKI) form a helical membrane-spanning segment. Topologically, residues 51 to 63 (SITQIERRFDISS) are extracellular. Residues 64–84 (SLAGLIDGSFEIGNLLVIVFV) traverse the membrane as a helical segment. Residues 85 to 96 (SYFGSKLHRPKL) lie on the Cytoplasmic side of the membrane. Residues 97-117 (IGIGCLLMGTGSILTSLPHFF) form a helical membrane-spanning segment. Residues 118 to 170 (MGYYRYSKETNIDPSENSTSNLPNCLINQMLSLNRTPSEIIERGCVKESGSHM) lie on the Extracellular side of the membrane. N-linked (GlcNAc...) asparagine glycosylation is found at asparagine 134 and asparagine 151. A helical transmembrane segment spans residues 171-191 (WIYVFMGNMLRGIGETPIVPL). The Cytoplasmic segment spans residues 192–206 (GISYIDDFAKEGHSS). The chain crosses the membrane as a helical span at residues 207–227 (LYLGTVNVMGMTGLVFAFMLG). Over 228–258 (SLFAKMYVDIGYVDLSTIRITPKDSRWVGAW) the chain is Extracellular. A helical membrane pass occupies residues 259-279 (WLGFLVSGIVSIISSIPFFFL). Residues 280–339 (PLNPNKPQKERKVSLFLHVLKTNDKRNQIANLTNRRKYITKNVTGFFQSLKSILTNPLYV) lie on the Cytoplasmic side of the membrane. The chain crosses the membrane as a helical span at residues 340-360 (IFVIFTLLHMSSYIASLTYII). Residues 361–376 (KMVEQQYGWSASKTNF) are Extracellular-facing. The helical transmembrane segment at 377-397 (LLGVLALPAVAIGMFSGGYII) threads the bilayer. The Cytoplasmic portion of the chain corresponds to 398 to 409 (KKFKLSLVGLAK). A helical membrane pass occupies residues 410-430 (LAFCSATVHLLSQVLYFFLIC). Residues 431–539 (ESKSVAGLTL…CTRKSYVYFV (109 aa)) are Extracellular-facing. A Kazal-like domain is found at 453 to 508 (DVPLSYCNSECNCDESQWEPVCGNNGITYLSPCLAGCKSSSGNKEPIVFYNCSCVE). 3 cysteine pairs are disulfide-bonded: cysteine 459/cysteine 489, cysteine 465/cysteine 485, and cysteine 474/cysteine 506. N-linked (GlcNAc...) asparagine glycosylation is found at asparagine 503 and asparagine 516. Residues 540–560 (IQVLDAFLCAVGLTSYSVLVI) traverse the membrane as a helical segment. The Cytoplasmic segment spans residues 561 to 568 (RIVQPELK). The chain crosses the membrane as a helical span at residues 569-589 (ALAIGFHSMIMRSLGGILVPI). At 590–624 (YFGALIDTTCMKWSTNSCGARGACRIYNSTYLGRA) the chain is on the extracellular side. The N-linked (GlcNAc...) asparagine glycan is linked to asparagine 617. Residues 625–645 (FFGLKVALIFPVLVLLTVFIF) traverse the membrane as a helical segment. Residues 646–687 (VVRKKSHGKDTKVLENERQVMDEANLEFLNDSEHFVPSAEEQ) are Cytoplasmic-facing.

The protein belongs to the organo anion transporter (TC 2.A.60) family. In terms of tissue distribution, expressed in the perivenular areas (centrilobular) of the liver (at protein level).

Its subcellular location is the smooth endoplasmic reticulum membrane. It is found in the cell membrane. The protein resides in the endoplasmic reticulum membrane. The catalysed reaction is 17beta-estradiol 17-O-(beta-D-glucuronate)(out) = 17beta-estradiol 17-O-(beta-D-glucuronate)(in). It catalyses the reaction dehydroepiandrosterone 3-sulfate(out) = dehydroepiandrosterone 3-sulfate(in). The enzyme catalyses taurocholate(out) = taurocholate(in). It carries out the reaction lithocholate(out) = lithocholate(in). Transport activity is induced by farnesoid X receptor (FXR) agonists such as chenodeoxycholate. Functionally, mediates the Na(+)-independent uptake of organic anions. Transports the conjugated steroids 17-beta-glucuronosyl estradiol (17beta-estradiol 17-O-(beta-D-glucuronate) or E2G) and dehydroepiandrosterone 3-sulfate (DHEAS) at the smooth endoplasmic reticulum membrane (SER), granting access to metabolizing enzymes. Contributes to the metabolism of bile acids such as taurocholate (cholyltaurine) and lithocholate, by functioning as a doorway between SER and cytosol, thereby decreasing their circulating levels and protecting the organism from their detergent properties. Regulates access or exit of drugs to the SER lumen. This Homo sapiens (Human) protein is SLCO1B3-SLCO1B7 readthrough transcript protein.